A 648-amino-acid polypeptide reads, in one-letter code: Spike protein P3 (648 aa).

In terms of assembly, interacts with P6.

It is found in the virion membrane. Functionally, P3 protein is necessary for adsorption onto host cells. Attaches to a type IV pilus of the host. This chain is Spike protein P3 (P3), found in Pseudomonas savastanoi pv. phaseolicola (Pseudomonas syringae pv. phaseolicola).